The chain runs to 399 residues: Glutamine synthetase 1, mitochondrial (399 aa).

The transit peptide at 1 to 27 (MALRVAGLFLKKELVAPATQQLRLLRT) directs the protein to the mitochondrion. Residues 62-143 (VQATYLWIDG…VLCDTYSADG (82 aa)) form the GS beta-grasp domain. Residues 150-399 (KRAAFQAAID…AIVRTCLLNE (250 aa)) form the GS catalytic domain.

The protein belongs to the glutamine synthetase family. In terms of assembly, homooctamer.

The protein localises to the mitochondrion. It catalyses the reaction L-glutamate + NH4(+) + ATP = L-glutamine + ADP + phosphate + H(+). This is Glutamine synthetase 1, mitochondrial (Gs1) from Drosophila melanogaster (Fruit fly).